Consider the following 101-residue polypeptide: Putative fatty acid-binding protein 5-like protein 3 (101 aa).

Belongs to the calycin superfamily. Fatty-acid binding protein (FABP) family.

High specificity for fatty acids. The polypeptide is Putative fatty acid-binding protein 5-like protein 3 (FABP5P3) (Homo sapiens (Human)).